A 589-amino-acid chain; its full sequence is Probable cytochrome P450 49a1 (589 aa).

The tract at residues 56–90 (TGESSNPKKLNVSQQPVTSVATTRTTASSLPAETT) is disordered. Over residues 57–71 (GESSNPKKLNVSQQP) the composition is skewed to polar residues. Low complexity predominate over residues 72–84 (VTSVATTRTTASS). Cysteine 536 is a heme binding site.

The protein belongs to the cytochrome P450 family. It depends on heme as a cofactor.

The protein resides in the endoplasmic reticulum membrane. The protein localises to the microsome membrane. Its function is as follows. May be involved in the metabolism of insect hormones and in the breakdown of synthetic insecticides. This Drosophila melanogaster (Fruit fly) protein is Probable cytochrome P450 49a1 (Cyp49a1).